A 155-amino-acid polypeptide reads, in one-letter code: Probable cyclic pyranopterin monophosphate synthase (155 aa).

Substrate contacts are provided by residues 74-76 (MCH) and 110-111 (ME). Asp-125 is an active-site residue.

This sequence belongs to the MoaC family. In terms of assembly, homohexamer; trimer of dimers.

It carries out the reaction (8S)-3',8-cyclo-7,8-dihydroguanosine 5'-triphosphate = cyclic pyranopterin phosphate + diphosphate. The protein operates within cofactor biosynthesis; molybdopterin biosynthesis. In terms of biological role, catalyzes the conversion of (8S)-3',8-cyclo-7,8-dihydroguanosine 5'-triphosphate to cyclic pyranopterin monophosphate (cPMP). In Methanoregula boonei (strain DSM 21154 / JCM 14090 / 6A8), this protein is Probable cyclic pyranopterin monophosphate synthase.